The sequence spans 673 residues: MSRTKDPAKQAEDLREKLRYHEHRYYVLDDPEISDADYDVMMNELKALEAKHPELLTPDSPTQRVGGKPREGFVKVAHSAPMLSLDNAYNEEELRDWARRVEELSGKAEIEYECELKLDGLSMALRYQDARFVLAVTRGDGSIGEDVTLNLRTVKSVPLGVSSATLKKTHMLGDFEVRGEVIFPTKSFEKMNEDREKQGLAKFANPRNAAAGAVRVLEPNITAQRRLDFYAYFLLVDGRVHIDRQSEALDTLEKLGFKVNSNRAVFKSIDDVLKFIHKKEEDREKLPYEIDGVVIKVNSTALWQRLGFTGKAPRWAIAYKYAARAAVTQVEDILVQVGRTGKLTPVAALKPVPIGGTTVSRATLHNMDEIDRLGLLIGDWVQVERGGDVIPKVVKVIDDKDHPRGKKKFKMPERCPECGGHVVRTEGEADHRCVNANCPAKLRESILHFASRGVMNIEGMGDSLVNQLVDRGLVKNVADIYELDEEKLLSLERMGKKSAQNILDEIKGTKKLPLERVIYGLGIRMVGERTAQFLAEHFGSLDGVMKATEEELLEVEEVGPRIAQSIHEFFAEPSNRELVKRLEAAGLQFKGVKKERGTALAGQTFVLTGSLPTYSRDEAKKLIEDAGGKVSGSVSKKTNYVVAGEEAGSKLDKARDLGVAVIDEDALKKLLGK.

NAD(+) contacts are provided by residues aspartate 35–aspartate 39, serine 84–leucine 85, and glutamate 115. Catalysis depends on lysine 117, which acts as the N6-AMP-lysine intermediate. 4 residues coordinate NAD(+): arginine 138, glutamate 180, lysine 296, and lysine 320. Cysteine 415, cysteine 418, cysteine 433, and cysteine 438 together coordinate Zn(2+). In terms of domain architecture, BRCT spans glutamate 595–lysine 673.

It belongs to the NAD-dependent DNA ligase family. LigA subfamily. Mg(2+) serves as cofactor. Mn(2+) is required as a cofactor.

The enzyme catalyses NAD(+) + (deoxyribonucleotide)n-3'-hydroxyl + 5'-phospho-(deoxyribonucleotide)m = (deoxyribonucleotide)n+m + AMP + beta-nicotinamide D-nucleotide.. Functionally, DNA ligase that catalyzes the formation of phosphodiester linkages between 5'-phosphoryl and 3'-hydroxyl groups in double-stranded DNA using NAD as a coenzyme and as the energy source for the reaction. It is essential for DNA replication and repair of damaged DNA. The protein is DNA ligase of Koribacter versatilis (strain Ellin345).